We begin with the raw amino-acid sequence, 498 residues long: MAEVDWIHRHPKAEDLRVGLISWAGTYLTFEAYKSSVTASAKSLGRRQTWELLVSNEHESQAVIRLKSLQGLYLLCEADGTVCYGRPRTSHHGCFLLRFHRNGKWTLQCIISGRYLESDGEDVFCNSRVLSAYHMWTPRPALHVHVILYSPIYHSYARADHTVGRIWVDAAIPCLEECGFLLHFQDGCYHLETSTHHFLSRVDRLVPQRSSQTAFHMQVRPRGLVALCDGEGGTLYPQGSHLLLGMGSAPMKGEEWFVLQHFPTWVSLKSKSRRFLSVIYDAEVCAASERLTQMSLFQYECDSETPTLQLRSANGYYLAQRRHRAIIADGHPMESDTFFRVHWNCGKITLQSPNGRFLGIASDGLLMANVTIPGPNEELGIRFANRPFLVLRGRYGYVGSSSDHDLLKCNMDQPDCIQLLPCRQGIYHFQAQGGSFWSITSFGTFRPWGKFALNFCIELQGSSLLTVLAPNGFYLRADRSGTLLADSEEITKECIWEF.

It belongs to the fascin family. In terms of tissue distribution, expressed in testis.

The protein resides in the cytoplasm. The protein localises to the cytoskeleton. In terms of biological role, acts as an actin bundling protein. This is Fascin-3 (Fscn3) from Mus musculus (Mouse).